A 323-amino-acid polypeptide reads, in one-letter code: Ubiquinone biosynthesis protein COQ4, mitochondrial (323 aa).

A mitochondrion-targeting transit peptide spans 1 to 29; the sequence is MLKSTVSNTRIKCCRIDQRRNYLFTALAS. The Zn(2+) site is built by His205, Asp206, His209, and Glu221.

The protein belongs to the COQ4 family. In terms of assembly, component of a multi-subunit COQ enzyme complex, composed of at least COQ3, COQ4, COQ5, COQ6, COQ7 and COQ9. Zn(2+) is required as a cofactor.

It localises to the mitochondrion inner membrane. It carries out the reaction a 4-hydroxy-3-methoxy-5-(all-trans-polyprenyl)benzoate + H(+) = a 2-methoxy-6-(all-trans-polyprenyl)phenol + CO2. It functions in the pathway cofactor biosynthesis; ubiquinone biosynthesis. Its function is as follows. Lyase that catalyzes the C1-decarboxylation of 4-hydroxy-3-methoxy-5-(all-trans-polyprenyl)benzoic acid into 2-methoxy-6-(all-trans-polyprenyl)phenol during ubiquinone biosynthesis. The chain is Ubiquinone biosynthesis protein COQ4, mitochondrial from Candida dubliniensis (strain CD36 / ATCC MYA-646 / CBS 7987 / NCPF 3949 / NRRL Y-17841) (Yeast).